The following is a 277-amino-acid chain: Large ribosomal subunit protein uL2 (277 aa).

Disordered stretches follow at residues 32 to 58 (KSLT…RGGG) and 225 to 277 (VAMN…RRNK). Residues 258-277 (YKTRKKKRYSDKFIIKRRNK) are compositionally biased toward basic residues.

Belongs to the universal ribosomal protein uL2 family. As to quaternary structure, part of the 50S ribosomal subunit. Forms a bridge to the 30S subunit in the 70S ribosome.

One of the primary rRNA binding proteins. Required for association of the 30S and 50S subunits to form the 70S ribosome, for tRNA binding and peptide bond formation. It has been suggested to have peptidyltransferase activity; this is somewhat controversial. Makes several contacts with the 16S rRNA in the 70S ribosome. The chain is Large ribosomal subunit protein uL2 from Borreliella afzelii (strain PKo) (Borrelia afzelii).